Consider the following 505-residue polypeptide: Maturase K (505 aa).

The protein belongs to the intron maturase 2 family. MatK subfamily.

It is found in the plastid. The protein localises to the chloroplast. Its function is as follows. Usually encoded in the trnK tRNA gene intron. Probably assists in splicing its own and other chloroplast group II introns. This is Maturase K from Froelichia floridana (Florida snake-cotton).